The primary structure comprises 162 residues: Large ribosomal subunit protein uL15 (162 aa).

Positions 1–44 (MKLNELRDNPGATKNRIRVGRGIGSGKGKTAGRGVKGQKSREGV) are disordered. Residues 21-35 (RGIGSGKGKTAGRGV) are compositionally biased toward gly residues.

This sequence belongs to the universal ribosomal protein uL15 family. In terms of assembly, part of the 50S ribosomal subunit.

Functionally, binds to the 23S rRNA. The chain is Large ribosomal subunit protein uL15 from Rhodospirillum rubrum (strain ATCC 11170 / ATH 1.1.1 / DSM 467 / LMG 4362 / NCIMB 8255 / S1).